The primary structure comprises 94 residues: MVVLINSECNSATPLTLCEPTIAKKAILICLSGEFSSMMDIRDKRSTSLGNFLATSCKKNQLISYIISKCLGSKWPKRPTGHFSRASCITVWLV.

This is an uncharacterized protein from Saccharomyces cerevisiae (strain ATCC 204508 / S288c) (Baker's yeast).